Here is a 360-residue protein sequence, read N- to C-terminus: Blue-light-activated histidine kinase 1 (360 aa).

A PAS domain is found at 38–109; it reads LFLETTQQTR…KLREGIAAER (72 aa). Residue cysteine 85 is modified to S-4a-FMN cysteine. The region spanning 109 to 163 is the PAC domain; the sequence is RYTVVDLLNYRKDGIPFWNAVHVGPIYGEDGTLQYFYGSQWDITDIVAERRKAET. Histidine 173 bears the Phosphohistidine; by autocatalysis mark. An HWE histidine kinase domain region spans residues 260 to 303; it reads RSVTALGLALHELATNAVKYGALSVDAGRVEISWSREDGDVTLV.

FMN binds covalently to cysteine after exposure to blue light and this bond is spontaneously broken in the dark.

It carries out the reaction ATP + protein L-histidine = ADP + protein N-phospho-L-histidine.. Its function is as follows. Photosensitive kinase that is involved in increased bacterial virulence upon exposure to light. This is Blue-light-activated histidine kinase 1 from Erythrobacter litoralis (strain HTCC2594).